Consider the following 214-residue polypeptide: Ribosomal RNA small subunit methyltransferase G (214 aa).

S-adenosyl-L-methionine is bound by residues Gly-77, Phe-82, 128 to 129 (VE), and Arg-143.

This sequence belongs to the methyltransferase superfamily. RNA methyltransferase RsmG family.

Its subcellular location is the cytoplasm. It carries out the reaction guanosine(527) in 16S rRNA + S-adenosyl-L-methionine = N(7)-methylguanosine(527) in 16S rRNA + S-adenosyl-L-homocysteine. Specifically methylates the N7 position of guanine in position 527 of 16S rRNA. The chain is Ribosomal RNA small subunit methyltransferase G from Nitrosomonas europaea (strain ATCC 19718 / CIP 103999 / KCTC 2705 / NBRC 14298).